Reading from the N-terminus, the 196-residue chain is DnaA initiator-associating protein DiaA (196 aa).

One can recognise an SIS domain in the interval 34 to 196; that stretch reads LVQSLLNGNK…DNTLFPHQDV (163 aa).

Belongs to the SIS family. DiaA subfamily. In terms of assembly, homotetramer; dimer of dimers.

Functionally, required for the timely initiation of chromosomal replication via direct interactions with the DnaA initiator protein. The sequence is that of DnaA initiator-associating protein DiaA from Escherichia coli O6:K15:H31 (strain 536 / UPEC).